The primary structure comprises 135 residues: Putative pre-16S rRNA nuclease (135 aa).

This sequence belongs to the YqgF nuclease family.

It localises to the cytoplasm. Its function is as follows. Could be a nuclease involved in processing of the 5'-end of pre-16S rRNA. The protein is Putative pre-16S rRNA nuclease of Clostridium novyi (strain NT).